The chain runs to 535 residues: Isoleucine N-monooxygenase 1 (535 aa).

At 1-8 the chain is on the cytoplasmic side; it reads MGLMPDFL. The helical; Signal-anchor for type II membrane protein transmembrane segment at 9–29 threads the bilayer; that stretch reads SLCHEFPWTFLLVVIFSFMIF. Over 30–535 the chain is Lumenal; it reads KVTKTHLVNK…AAELYRTNEI (506 aa). N38, N232, and N404 each carry an N-linked (GlcNAc...) asparagine glycan. C470 serves as a coordination point for heme.

This sequence belongs to the cytochrome P450 family. Requires heme as cofactor. Exclusively expressed in aerial parts. Highest expression in the apical leaves. Also detected in the second leaf from the top and in the stem. Not expressed in older leaves or roots.

It localises to the microsome membrane. It carries out the reaction L-isoleucine + 2 reduced [NADPH--hemoprotein reductase] + 2 O2 = (1E,2S)-2-methylbutanal oxime + 2 oxidized [NADPH--hemoprotein reductase] + CO2 + 3 H2O + 2 H(+). It catalyses the reaction L-isoleucine + reduced [NADPH--hemoprotein reductase] + O2 = N-hydroxy-L-isoleucine + oxidized [NADPH--hemoprotein reductase] + H2O + 2 H(+). The enzyme catalyses N-hydroxy-L-isoleucine + reduced [NADPH--hemoprotein reductase] + O2 = N,N-dihydroxy-L-isoleucine + oxidized [NADPH--hemoprotein reductase] + H2O + H(+). The catalysed reaction is L-valine + 2 reduced [NADPH--hemoprotein reductase] + 2 O2 = (E)-2-methylpropanal oxime + 2 oxidized [NADPH--hemoprotein reductase] + CO2 + 3 H2O + 2 H(+). It carries out the reaction L-valine + reduced [NADPH--hemoprotein reductase] + O2 = N-hydroxy-L-valine + oxidized [NADPH--hemoprotein reductase] + H2O + 2 H(+). It catalyses the reaction N-hydroxy-L-valine + reduced [NADPH--hemoprotein reductase] + O2 = N,N-dihydroxy-L-valine + oxidized [NADPH--hemoprotein reductase] + H2O + H(+). It functions in the pathway secondary metabolite biosynthesis. Its function is as follows. Involved in the biosynthesis of the cyanogenic glucosides linamarin and lotaustralin and of the nitirle glucosides rhodiocyanoside A and D. Can use L-isoleucine &gt; L-valine as substrate, but not L-leucine, L-phenylalanine or L-tyrosine. Catalyzes multi-step reactions starting with two successive N-hydroxylations using L-isoleucine and, to a lower extent, L-valine as substrates leading to the formation of N,N-dihydroxy-L-valine and N,N-dihydroxy-L-isoleucine, respectively; following spontaneous reactions lead to the production of (E)-2-methylpropanal oxime and (1E,2S)-2-methylbutanal oxime, respectively. In Lotus japonicus (Lotus corniculatus var. japonicus), this protein is Isoleucine N-monooxygenase 1.